A 245-amino-acid polypeptide reads, in one-letter code: tRNA1(Val) (adenine(37)-N6)-methyltransferase (245 aa).

This sequence belongs to the methyltransferase superfamily. tRNA (adenine-N(6)-)-methyltransferase family.

The protein localises to the cytoplasm. It carries out the reaction adenosine(37) in tRNA1(Val) + S-adenosyl-L-methionine = N(6)-methyladenosine(37) in tRNA1(Val) + S-adenosyl-L-homocysteine + H(+). Its function is as follows. Specifically methylates the adenine in position 37 of tRNA(1)(Val) (anticodon cmo5UAC). The polypeptide is tRNA1(Val) (adenine(37)-N6)-methyltransferase (Escherichia fergusonii (strain ATCC 35469 / DSM 13698 / CCUG 18766 / IAM 14443 / JCM 21226 / LMG 7866 / NBRC 102419 / NCTC 12128 / CDC 0568-73)).